The primary structure comprises 1461 residues: A disintegrin and metalloproteinase with thrombospondin motifs adt-1 (1461 aa).

Positions M1–S21 are cleaved as a signal peptide. Residues V22–Y163 constitute a propeptide that is removed on maturation. N-linked (GlcNAc...) asparagine glycosylation is present at N69. A Cysteine switch motif is present at residues S190 to Q197. N-linked (GlcNAc...) asparagine glycosylation is present at N212. A Peptidase M12B domain is found at I233 to L435. H388 is a binding site for Zn(2+). E389 is an active-site residue. Positions 392 and 398 each coordinate Zn(2+). The cysteines at positions 405 and 410 are disulfide-linked. Positions R464–D546 constitute a Disintegrin domain. TSP type-1 domains are found at residues H708–E759, F761–D802, E804–I852, S853–P898, L903–E952, Y955–L1000, S1035–L1083, I1087–S1133, A1148–S1200, A1203–S1260, D1265–H1321, D1324–D1378, and D1382–P1435. 3 disulfides stabilise this stretch: C719–C751, C723–C758, and C735–C741. 6 cysteine pairs are disulfide-bonded: C816–C846, C820–C851, C831–C836, C862–C892, C866–C897, and C877–C882. Disulfide bonds link C1047–C1077, C1051–C1082, and C1062–C1067. 12 disulfides stabilise this stretch: C1160–C1194, C1162–C1199, C1173–C1184, C1215–C1253, C1219–C1259, C1231–C1243, C1277–C1314, C1281–C1320, C1292–C1304, C1336–C1372, C1340–C1377, and C1351–C1362.

The cofactor is Zn(2+). In terms of tissue distribution, in hermaphrodites, expressed in the vulva, head ganglia, ventral nerve cord and amphid neurons. Expressed in the rays of the male tail.

It is found in the secreted. Functionally, plays a role in ray morphogenesis in the male tail, probably by remodeling the extracellular matrix (ECM) in the cuticle. The chain is A disintegrin and metalloproteinase with thrombospondin motifs adt-1 from Caenorhabditis elegans.